The chain runs to 116 residues: Propanediol dehydratase-reactivating factor small subunit (116 aa).

Residue glutamate 31 coordinates Mg(2+).

This sequence belongs to the DdrB/PduH family. In terms of assembly, forms a heterotetramer PduG(2)/PduH(2). It depends on Mg(2+) as a cofactor.

The protein localises to the bacterial microcompartment. It catalyses the reaction ATP + H2O = ADP + phosphate + H(+). It participates in polyol metabolism; 1,2-propanediol degradation. Functionally, small subunit of the propanediol dehydratase-reactivating factor (DDR), which reactivates suicidally inhibited adenosylcobalamin-dependent propanediol dehydratase (diol dehydratase, DDH) found in the bacterial microcompartment (BMC) dedicated to 1,2-propanediol (1,2-PD) degradation. Reactivates inactivated DDH in the presence of ATP, Mg(2+) and free adenosylcobalamin (AdoCbl), by mediating the exchange of the tightly bound damaged cofactor AdoCbl for a free intact one. Expression of a cosmid containing the full 21-gene pdu operon in E.coli allows E.coli to grow on 1,2-propanediol (1,2-PD) with the appearance of bacterial microcompartments (BMC) in its cytoplasm. In terms of biological role, the 1,2-PD-specific bacterial microcompartment (BMC) concentrates low levels of 1,2-PD catabolic enzymes, concentrates volatile reaction intermediates thus enhancing pathway flux and keeps the level of toxic, mutagenic propionaldehyde low. In Citrobacter freundii, this protein is Propanediol dehydratase-reactivating factor small subunit.